Consider the following 60-residue polypeptide: LKCYKLVPPFWKTCPEGKNLCYKMYMVSTLTVPVKRGCIDVCPKNSALVKYVCCNTDKCN.

Disulfide bonds link Cys3/Cys21, Cys14/Cys38, Cys42/Cys53, and Cys54/Cys59.

Belongs to the three-finger toxin family. Short-chain subfamily. Type IA cytotoxin sub-subfamily. As to quaternary structure, monomer in solution; Homodimer and oligomer in the presence of negatively charged lipids forming a pore with a size ranging between 20 and 30 Angstroms. As to expression, expressed by the venom gland.

It is found in the secreted. It localises to the target cell membrane. Shows cytolytic activity on many different cells by forming pore in lipid membranes. In vivo, increases heart rate or kills the animal by cardiac arrest. In addition, it binds to heparin with high affinity, interacts with Kv channel-interacting protein 1 (KCNIP1) in a calcium-independent manner, and binds to integrin alpha-V/beta-3 (ITGAV/ITGB3) with moderate affinity. The sequence is that of Cytotoxin 3 from Naja annulifera (Banded Egyptian cobra).